A 189-amino-acid polypeptide reads, in one-letter code: Dirigent protein 21 (189 aa).

Positions 1 to 19 (MASLYLLLLLPLFLALILA) are cleaved as a signal peptide. Residues Asn72 and Asn173 are each glycosylated (N-linked (GlcNAc...) asparagine).

It belongs to the plant dirigent protein family. In terms of assembly, homodimer.

Its subcellular location is the secreted. In terms of biological role, dirigent proteins impart stereoselectivity on the phenoxy radical-coupling reaction, yielding optically active lignans from two molecules of coniferyl alcohol in the biosynthesis of lignans, flavonolignans, and alkaloids and thus plays a central role in plant secondary metabolism. This chain is Dirigent protein 21 (DIR21), found in Arabidopsis thaliana (Mouse-ear cress).